Consider the following 373-residue polypeptide: Carboxylesterase/phospholipase LipF (373 aa).

The Involved in the stabilization of the negatively charged intermediate by the formation of the oxyanion hole signature appears at His-116–Gly-118. Active-site residues include Ser-186, Glu-285, and His-315.

It belongs to the 'GDXG' lipolytic enzyme family.

The enzyme catalyses a carboxylic ester + H2O = an alcohol + a carboxylate + H(+). It carries out the reaction a 1,2-diacyl-sn-glycero-3-phosphocholine + H2O = phosphocholine + a 1,2-diacyl-sn-glycerol + H(+). A short-chain esterase and phospholipase. The polypeptide is Carboxylesterase/phospholipase LipF (Mycobacterium tuberculosis (strain CDC 1551 / Oshkosh)).